A 94-amino-acid chain; its full sequence is Alpha-galactosyl-binding lectin (94 aa).

As to quaternary structure, homodimer. Contains three disulfide bonds.

Functionally, alpha-galactosyl-binding lectin with preference for galactose-alpha-1,4-galactose. The polypeptide is Alpha-galactosyl-binding lectin (Lyophyllum decastes (Fried chicken mushroom)).